The chain runs to 272 residues: Shikimate dehydrogenase (NADP(+)) (272 aa).

Residues 14–16 and Thr-61 contribute to the shikimate site; that span reads SLS. The active-site Proton acceptor is Lys-65. Residue Asp-102 participates in shikimate binding. Residues 127–131, 151–156, and Leu-215 contribute to the NADP(+) site; these read GAGGA and NRTPSK. Tyr-217 provides a ligand contact to shikimate. Position 239 (Gly-239) interacts with NADP(+).

The protein belongs to the shikimate dehydrogenase family. As to quaternary structure, homodimer.

The enzyme catalyses shikimate + NADP(+) = 3-dehydroshikimate + NADPH + H(+). The protein operates within metabolic intermediate biosynthesis; chorismate biosynthesis; chorismate from D-erythrose 4-phosphate and phosphoenolpyruvate: step 4/7. Functionally, involved in the biosynthesis of the chorismate, which leads to the biosynthesis of aromatic amino acids. Catalyzes the reversible NADPH linked reduction of 3-dehydroshikimate (DHSA) to yield shikimate (SA). This Coxiella burnetii (strain CbuG_Q212) (Coxiella burnetii (strain Q212)) protein is Shikimate dehydrogenase (NADP(+)).